A 76-amino-acid polypeptide reads, in one-letter code: DNA-directed RNA polymerase subunit epsilon (76 aa).

It belongs to the RNA polymerase subunit epsilon family. As to quaternary structure, RNAP is composed of a core of 2 alpha, a beta and a beta' subunit. The core is associated with a delta subunit, and at least one of epsilon or omega. When a sigma factor is associated with the core the holoenzyme is formed, which can initiate transcription.

It carries out the reaction RNA(n) + a ribonucleoside 5'-triphosphate = RNA(n+1) + diphosphate. A non-essential component of RNA polymerase (RNAP). The sequence is that of DNA-directed RNA polymerase subunit epsilon from Streptococcus mutans serotype c (strain ATCC 700610 / UA159).